The sequence spans 122 residues: Large ribosomal subunit protein uL14 (122 aa).

This sequence belongs to the universal ribosomal protein uL14 family. In terms of assembly, part of the 50S ribosomal subunit. Forms a cluster with proteins L3 and L19. In the 70S ribosome, L14 and L19 interact and together make contacts with the 16S rRNA in bridges B5 and B8.

Binds to 23S rRNA. Forms part of two intersubunit bridges in the 70S ribosome. This chain is Large ribosomal subunit protein uL14, found in Nitrosomonas eutropha (strain DSM 101675 / C91 / Nm57).